The sequence spans 775 residues: E3 ubiquitin-protein ligase ICP0 (775 aa).

The disordered stretch occupies residues 1–112 (MEPRPGASTR…PPREDGGSDE (112 aa)). 2 stretches are compositionally biased toward basic and acidic residues: residues 10–21 (RRPEGRPQREPA) and 45–57 (VGGR…HDDD). Acidic residues predominate over residues 58-69 (SASEADSTDTEL). T67 carries the post-translational modification Phosphothreonine; by host; by CK1. The RING-type zinc finger occupies 116–157 (CAVCTDEIAPHLRCDTFPCMHRFCIPCMKTWMQLRNTCPLCN). Positions 221–636 (RALSPTHPEP…HAETSGAVPA (416 aa)) are disordered. Over residues 231–243 (TTDEDDDDLDDAD) the composition is skewed to acidic residues. Over residues 258 to 284 (RRGAAAPPVTGGASHAAPQPAAARTAP) the composition is skewed to low complexity. The span at 293-302 (GSSNTNTTTN) shows a compositional bias: polar residues. Low complexity predominate over residues 310 to 321 (RQSRAAAPRGAS). Residues 322–331 (GPSGGVGVGV) are compositionally biased toward gly residues. Residues 369 to 390 (PASPHRPPAAPMPGSAPRPGPP) show a composition bias toward pro residues. Positions 391–409 (ASAAASGPARPRAAVAPCV) are enriched in low complexity. Over residues 410-421 (RAPPPGPGPRAP) the composition is skewed to pro residues. Residues 422-431 (APGAEPAARP) show a composition bias toward low complexity. Positions 439–453 (QSHSSLAQAANQEQS) are enriched in polar residues. Positions 464-476 (GSGGPGVEGGHGP) are enriched in gly residues. A compositionally biased stretch (low complexity) spans 477–493 (SRGAAPSGAAPLPSAAS). The span at 509–519 (GQENPSPQSTR) shows a compositional bias: polar residues. Over residues 539–549 (GPGGRGQGGPG) the composition is skewed to gly residues. Over residues 550-592 (TPLTSSAASASSSSASSSSAPTPAGAASSAAGAASSSASASSG) the composition is skewed to low complexity. Over residues 617–626 (GPRKCARKTR) the composition is skewed to basic residues.

It belongs to the simplexviruses ICp0 family. In terms of assembly, interacts directly with human RCOR1/CoREST protein, leading to the disruption of the human BHC corepressor complex. Interacts with human CENPA, leading to its degradation. Interacts with human USP7; this interaction modulates ICP0 stability. Interacts with human CDC34. Interacts (when phosphorylated) with human RNF8 (via FHA domain). Interacts with human TRIM27. Interacts with human ZBP1. Interacts with host MORC3; this interaction promotes the degradation of host MORC3. Phosphorylated at Thr-67, leading to promote interaction with host RNF8. Phosphorylated by host CHEK2; leading to increased SUMO-targeted ubiquitin ligase activity of ICP0. In terms of processing, auto-ubiquitinated. Deubiquitinated by host USP7; leading to stabilize it.

The protein localises to the host cytoplasm. The protein resides in the host nucleus. The enzyme catalyses S-ubiquitinyl-[E2 ubiquitin-conjugating enzyme]-L-cysteine + [acceptor protein]-L-lysine = [E2 ubiquitin-conjugating enzyme]-L-cysteine + N(6)-ubiquitinyl-[acceptor protein]-L-lysine.. Its function is as follows. SUMO-targeted ubiquitin ligase that plays an essential role in nuclear antiviral defense evasion triggered by dsDNA viruses. Acts during the initial stages of lytic infection and the reactivation of latent viral genome. Prevents the antiviral effect of nuclear bodies by degrading host PML, SP100 and MORC3. Prevents antiviral response to viral DNA induced by IFI16 by degrading it. Additionally, inhibits host IRF3 nuclear signaling to prevent interferon production by the infected cells. Interestingly, the E3 ubiquitin ligase activity associated with the RING finger domain does not seem to be directly required to inhibit the activation of IRF3 but instead plays a critical role in modulating the cellular localization of ICP0. Upon reactivation of latent genome, suppresses the silencing of viral DNA by dissociating either HDAC1 or HDAC2 from the HDAC-RCOR1-REST-KDM1A complex localized at the ND10 structures and causes their dispersal. Two cellular histone ubiquitin ligases RNF8 and RNF168 are also targeted by ICP0 for degradation, leading to a loss of ubiquitinated forms of H2A, a relief of transcriptional repression, and the activation of latent viral genomes. Enhances the localization of host CCND3 to ND10 bodies that serve as precursors of replication compartments to enable efficient viral replication. Like many RING-finger E3 ubiquitin ligases, ICP0 can induce its own ubiquitination, an activity that promotes its instability due to its targeting to the 26S proteasome for degradation. ICP0 restricts this process by recruiting the cellular ubiquitin-specific protease USP7 that cleaves the anchored ubiquitin chains from ICP0, thereby promoting its stabilization. In Homo sapiens (Human), this protein is E3 ubiquitin-protein ligase ICP0 (ICP0).